The following is a 208-amino-acid chain: MGSCSGRCALVVLCAFQLVAALERQVFDFLGYQWAPILANFVHIIIVILGLFGTIQYRLRYVMVYTLWAAVWVTWNVFIICFYLEVGGLLKDSELLTFSLSRHRSWWRERWPGCLHEEVPAVGLGAPHGQALVSGAGCALEPSYVEALHSCLQILIALLGFVCGCQVVSVFTEEEDSFDFIGGFDPFPLYHVNEKPSSLLSKQVYLPA.

3 consecutive transmembrane segments (helical) span residues alanine 35 to isoleucine 55, valine 62 to phenylalanine 82, and cysteine 151 to phenylalanine 171.

It belongs to the NKAIN family. In terms of assembly, interacts with ATP1B1.

Its subcellular location is the cell membrane. This is Sodium/potassium-transporting ATPase subunit beta-1-interacting protein 4 (NKAIN4) from Homo sapiens (Human).